The primary structure comprises 293 residues: Notch homolog 2 N-terminal-like protein C (293 aa).

4 EGF-like domains span residues 42-81 (PPRMCRDGYEPCVNEGMCVTYHNGTGYCKCPEGFLGEYCQ), 82-120 (HRDPCEKNRCQNGGTCVAQAMLGKATCRCASGFTGEDCQ), 123-161 (TSHPCFVSRPCLNGGTCHMLSRDTYECTCQVGFTGKECQ), and 162-198 (WTDACLSHPCANGSTCTTVANQFSCKCLTGFTGQKCE). 17 disulfide bridges follow: C46–C59, C53–C69, C71–C80, C86–C97, C91–C108, C110–C119, C127–C139, C133–C149, C151–C160, C166–C177, C171–C186, C188–C197, C204–C216, C210–C225, C227–C236, C243–C254, and C248–C264. The N-linked (GlcNAc...) asparagine glycan is linked to N64. N-linked (GlcNAc...) asparagine glycosylation is present at N173. The 38-residue stretch at 200 to 237 (DVNECDIPGHCQHGGTCLNLPGSYQCQCLQGFTGQYCD) folds into the EGF-like 5; calcium-binding domain. The 38-residue stretch at 239-276 (LYVPCAPSPCVNGGTCRQTGDFTFECNCLPETVRRGTE) folds into the EGF-like 6 domain.

Belongs to the NOTCH family. As to quaternary structure, interacts with NOTCH2. Interacts with DLL1; the interaction is direct. Expressed in radial glia neural stem cells during cortical development.

Its subcellular location is the secreted. Functionally, human-specific protein that promotes neural progenitor proliferation and evolutionary expansion of the brain neocortex by regulating the Notch signaling pathway. Able to promote neural progenitor self-renewal, possibly by down-regulating neuronal differentiation genes, thereby delaying the differentiation of neuronal progenitors and leading to an overall final increase in neuronal production. Acts by enhancing the Notch signaling pathway via two different mechanisms that probably work in parallel to reach the same effect. Enhances Notch signaling pathway in a non-cell-autonomous manner via direct interaction with NOTCH2. Also promotes Notch signaling pathway in a cell-autonomous manner through inhibition of cis DLL1-NOTCH2 interactions, which promotes neuronal differentiation. The chain is Notch homolog 2 N-terminal-like protein C from Homo sapiens (Human).